The primary structure comprises 213 residues: Uridine kinase (213 aa).

15–22 (GASASGKS) is a binding site for ATP.

It belongs to the uridine kinase family.

It is found in the cytoplasm. It carries out the reaction uridine + ATP = UMP + ADP + H(+). It catalyses the reaction cytidine + ATP = CMP + ADP + H(+). Its pathway is pyrimidine metabolism; CTP biosynthesis via salvage pathway; CTP from cytidine: step 1/3. The protein operates within pyrimidine metabolism; UMP biosynthesis via salvage pathway; UMP from uridine: step 1/1. This Salmonella newport (strain SL254) protein is Uridine kinase.